A 409-amino-acid polypeptide reads, in one-letter code: Dihydrolipoyllysine-residue succinyltransferase component of 2-oxoglutarate dehydrogenase complex (409 aa).

The Lipoyl-binding domain occupies 2 to 77; it reads AIEILVPDLP…VSKQLLGKIS (76 aa). Lys43 bears the N6-lipoyllysine mark. Polar residues predominate over residues 83-107; that stretch reads DVSSATLKATNEPTPSDRQNAAIEN. The interval 83–114 is disordered; that stretch reads DVSSATLKATNEPTPSDRQNAAIENSHNHNAD. Positions 114–151 constitute a Peripheral subunit-binding (PSBD) domain; the sequence is DQSPVIRRLLAEHDLQADQIQGSGVGGRLTREDIEREI. Catalysis depends on residues His380 and Asp384.

Belongs to the 2-oxoacid dehydrogenase family. Forms a 24-polypeptide structural core with octahedral symmetry. Part of the 2-oxoglutarate dehydrogenase (OGDH) complex composed of E1 (2-oxoglutarate dehydrogenase), E2 (dihydrolipoamide succinyltransferase) and E3 (dihydrolipoamide dehydrogenase); the complex contains multiple copies of the three enzymatic components (E1, E2 and E3). (R)-lipoate is required as a cofactor.

It catalyses the reaction N(6)-[(R)-dihydrolipoyl]-L-lysyl-[protein] + succinyl-CoA = N(6)-[(R)-S(8)-succinyldihydrolipoyl]-L-lysyl-[protein] + CoA. The protein operates within amino-acid degradation; L-lysine degradation via saccharopine pathway; glutaryl-CoA from L-lysine: step 6/6. In terms of biological role, E2 component of the 2-oxoglutarate dehydrogenase (OGDH) complex which catalyzes the second step in the conversion of 2-oxoglutarate to succinyl-CoA and CO(2). This is Dihydrolipoyllysine-residue succinyltransferase component of 2-oxoglutarate dehydrogenase complex (sucB) from Haemophilus influenzae (strain ATCC 51907 / DSM 11121 / KW20 / Rd).